The sequence spans 394 residues: Cell division protein FtsZ (394 aa).

Residues 21–25 (GGGGN), 108–110 (GTG), E139, R143, and D187 each bind GTP.

Belongs to the FtsZ family. In terms of assembly, homodimer. Polymerizes to form a dynamic ring structure in a strictly GTP-dependent manner. Interacts directly with several other division proteins. Interacts with the SulA inhibitor.

It is found in the cytoplasm. In terms of biological role, essential cell division protein that forms a contractile ring structure (Z ring) at the future cell division site. The regulation of the ring assembly controls the timing and the location of cell division. One of the functions of the FtsZ ring is to recruit other cell division proteins to the septum to produce a new cell wall between the dividing cells. Binds GTP and shows GTPase activity. The protein is Cell division protein FtsZ of Pseudomonas aeruginosa (strain ATCC 15692 / DSM 22644 / CIP 104116 / JCM 14847 / LMG 12228 / 1C / PRS 101 / PAO1).